A 214-amino-acid chain; its full sequence is ATP-dependent Clp protease proteolytic subunit (214 aa).

Serine 110 (nucleophile) is an active-site residue. Histidine 135 is an active-site residue.

It belongs to the peptidase S14 family. As to quaternary structure, fourteen ClpP subunits assemble into 2 heptameric rings which stack back to back to give a disk-like structure with a central cavity, resembling the structure of eukaryotic proteasomes.

It localises to the cytoplasm. It carries out the reaction Hydrolysis of proteins to small peptides in the presence of ATP and magnesium. alpha-casein is the usual test substrate. In the absence of ATP, only oligopeptides shorter than five residues are hydrolyzed (such as succinyl-Leu-Tyr-|-NHMec, and Leu-Tyr-Leu-|-Tyr-Trp, in which cleavage of the -Tyr-|-Leu- and -Tyr-|-Trp bonds also occurs).. In terms of biological role, cleaves peptides in various proteins in a process that requires ATP hydrolysis. Has a chymotrypsin-like activity. Plays a major role in the degradation of misfolded proteins. In Legionella pneumophila (strain Corby), this protein is ATP-dependent Clp protease proteolytic subunit.